The sequence spans 260 residues: uncharacterized protein (260 aa).

The PNPLA domain maps to 8 to 166 (LALGSGGARG…VDRIPVSVVK (159 aa)). A GXSXG motif is present at residues 39 to 43 (GSSMG). Ser-41 functions as the Nucleophile in the catalytic mechanism. Asp-153 serves as the catalytic Proton acceptor. Positions 153 to 155 (DGA) match the DGA/G motif.

This sequence belongs to the NTE family.

This is an uncharacterized protein from Bacillus subtilis (strain 168).